The primary structure comprises 476 residues: tRNA(Ile)-lysidine synthase (476 aa).

Ser25–Ser30 is a binding site for ATP.

It belongs to the tRNA(Ile)-lysidine synthase family.

It localises to the cytoplasm. The catalysed reaction is cytidine(34) in tRNA(Ile2) + L-lysine + ATP = lysidine(34) in tRNA(Ile2) + AMP + diphosphate + H(+). Ligates lysine onto the cytidine present at position 34 of the AUA codon-specific tRNA(Ile) that contains the anticodon CAU, in an ATP-dependent manner. Cytidine is converted to lysidine, thus changing the amino acid specificity of the tRNA from methionine to isoleucine. The sequence is that of tRNA(Ile)-lysidine synthase from Bacillus licheniformis (strain ATCC 14580 / DSM 13 / JCM 2505 / CCUG 7422 / NBRC 12200 / NCIMB 9375 / NCTC 10341 / NRRL NRS-1264 / Gibson 46).